A 223-amino-acid chain; its full sequence is MIPQTLEQLLSQAQSIAGLTFGELADELHIPVPPDLKRDKGWVGMLLERALGATAGSKAEQDFSHLGVELKTLPINAEGYPLETTFVSLAPLVQNSGVKWENSHVRHKLSCVLWMPIEGSRHIPLRERHIGAPILWKPTAEQERQLKQDWEELMDLIVLGKLDQITARIGEVMQLRPKGANSRAVTKGIGKNGEIIDTLPLGFYLRKEFTAQILNAFLDVKPL.

Belongs to the MutH family.

Its subcellular location is the cytoplasm. Sequence-specific endonuclease that cleaves unmethylated GATC sequences. It is involved in DNA mismatch repair. This Haemophilus influenzae (strain PittGG) protein is DNA mismatch repair protein MutH.